A 166-amino-acid polypeptide reads, in one-letter code: NAD(P)H-quinone oxidoreductase subunit I, chloroplastic (166 aa).

4Fe-4S ferredoxin-type domains lie at 55 to 84 and 95 to 124; these read GRIH…VDWK and LNYS…MTEE. [4Fe-4S] cluster-binding residues include Cys64, Cys67, Cys70, Cys74, Cys104, Cys107, Cys110, and Cys114.

This sequence belongs to the complex I 23 kDa subunit family. In terms of assembly, NDH is composed of at least 16 different subunits, 5 of which are encoded in the nucleus. [4Fe-4S] cluster is required as a cofactor.

It localises to the plastid. Its subcellular location is the chloroplast thylakoid membrane. The enzyme catalyses a plastoquinone + NADH + (n+1) H(+)(in) = a plastoquinol + NAD(+) + n H(+)(out). The catalysed reaction is a plastoquinone + NADPH + (n+1) H(+)(in) = a plastoquinol + NADP(+) + n H(+)(out). Functionally, NDH shuttles electrons from NAD(P)H:plastoquinone, via FMN and iron-sulfur (Fe-S) centers, to quinones in the photosynthetic chain and possibly in a chloroplast respiratory chain. The immediate electron acceptor for the enzyme in this species is believed to be plastoquinone. Couples the redox reaction to proton translocation, and thus conserves the redox energy in a proton gradient. The polypeptide is NAD(P)H-quinone oxidoreductase subunit I, chloroplastic (Steiractinia sodiroi).